A 363-amino-acid polypeptide reads, in one-letter code: S-adenosylmethionine:tRNA ribosyltransferase-isomerase (363 aa).

Belongs to the QueA family. Monomer.

The protein localises to the cytoplasm. The enzyme catalyses 7-aminomethyl-7-carbaguanosine(34) in tRNA + S-adenosyl-L-methionine = epoxyqueuosine(34) in tRNA + adenine + L-methionine + 2 H(+). Its pathway is tRNA modification; tRNA-queuosine biosynthesis. Transfers and isomerizes the ribose moiety from AdoMet to the 7-aminomethyl group of 7-deazaguanine (preQ1-tRNA) to give epoxyqueuosine (oQ-tRNA). In Haemophilus influenzae (strain PittEE), this protein is S-adenosylmethionine:tRNA ribosyltransferase-isomerase.